The chain runs to 361 residues: Chorismate synthase (361 aa).

NADP(+) contacts are provided by R48 and R54. FMN-binding positions include 125–127, 238–239, G278, 293–297, and R319; these read RSS, NA, and KPTSS.

Belongs to the chorismate synthase family. As to quaternary structure, homotetramer. FMNH2 is required as a cofactor.

The catalysed reaction is 5-O-(1-carboxyvinyl)-3-phosphoshikimate = chorismate + phosphate. Its pathway is metabolic intermediate biosynthesis; chorismate biosynthesis; chorismate from D-erythrose 4-phosphate and phosphoenolpyruvate: step 7/7. Catalyzes the anti-1,4-elimination of the C-3 phosphate and the C-6 proR hydrogen from 5-enolpyruvylshikimate-3-phosphate (EPSP) to yield chorismate, which is the branch point compound that serves as the starting substrate for the three terminal pathways of aromatic amino acid biosynthesis. This reaction introduces a second double bond into the aromatic ring system. The chain is Chorismate synthase from Yersinia pseudotuberculosis serotype IB (strain PB1/+).